The primary structure comprises 123 residues: Large ribosomal subunit protein bL12 (123 aa).

It belongs to the bacterial ribosomal protein bL12 family. As to quaternary structure, homodimer. Part of the ribosomal stalk of the 50S ribosomal subunit. Forms a multimeric L10(L12)X complex, where L10 forms an elongated spine to which 2 to 4 L12 dimers bind in a sequential fashion. Binds GTP-bound translation factors.

Forms part of the ribosomal stalk which helps the ribosome interact with GTP-bound translation factors. Is thus essential for accurate translation. This Chlorobium luteolum (strain DSM 273 / BCRC 81028 / 2530) (Pelodictyon luteolum) protein is Large ribosomal subunit protein bL12.